Here is a 369-residue protein sequence, read N- to C-terminus: Developmentally-regulated G-protein 3 (369 aa).

In terms of domain architecture, OBG-type G spans 66–291 (SRVGLVGFPS…LLDKIWEYLD (226 aa)). GTP-binding positions include 72–79 (GFPSVGKS), 118–122 (DLPGI), and 249–252 (NKID). In terms of domain architecture, TGS spans 291–367 (DLTRIYTKPK…EDEDVVQIVK (77 aa)).

This sequence belongs to the TRAFAC class OBG-HflX-like GTPase superfamily. OBG GTPase family.

Functionally, binds GDP and GTP, and has low GTPase activity in vitro. The protein is Developmentally-regulated G-protein 3 (DRG3) of Arabidopsis thaliana (Mouse-ear cress).